Consider the following 251-residue polypeptide: Triosephosphate isomerase (251 aa).

2 residues coordinate substrate: Asn12 and Lys14. His96 functions as the Electrophile in the catalytic mechanism. Glu168 functions as the Proton acceptor in the catalytic mechanism.

This sequence belongs to the triosephosphate isomerase family. Homodimer.

It is found in the cytoplasm. It localises to the glycosome. The enzyme catalyses D-glyceraldehyde 3-phosphate = dihydroxyacetone phosphate. Its pathway is carbohydrate biosynthesis; gluconeogenesis. It functions in the pathway carbohydrate degradation; glycolysis; D-glyceraldehyde 3-phosphate from glycerone phosphate: step 1/1. The sequence is that of Triosephosphate isomerase from Leishmania mexicana.